Reading from the N-terminus, the 601-residue chain is Replication protein A 70 kDa DNA-binding subunit (601 aa).

The interval 107–172 is disordered; the sequence is MPGKIGDPTP…NTPGGSSKVV (66 aa). Low complexity predominate over residues 124 to 135; sequence APSTAPAPTARP. The segment covering 137 to 153 has biased composition (polar residues); that stretch reads QPQNGSDGSTYRPSAQS. The segment at residues 184–268 is a DNA-binding region (OB); the sequence is WTIRARVTNK…LKNDYEMTLN (85 aa). At Ser-370 the chain carries Phosphoserine. A C4-type zinc finger spans residues 466–488; sequence CPSKDCNKKVVDQQNGMFRCEKC.

The protein belongs to the replication factor A protein 1 family. In terms of assembly, component of the heterotrimeric canonical replication protein A complex (RPA).

The protein resides in the nucleus. The protein localises to the PML body. In terms of biological role, as part of the heterotrimeric replication protein A complex (RPA/RP-A), binds and stabilizes single-stranded DNA intermediates, that form during DNA replication or upon DNA stress. It prevents their reannealing and in parallel, recruits and activates different proteins and complexes involved in DNA metabolism. Thereby, it plays an essential role both in DNA replication and the cellular response to DNA damage. The protein is Replication protein A 70 kDa DNA-binding subunit (rpa1) of Danio rerio (Zebrafish).